Here is a 272-residue protein sequence, read N- to C-terminus: Putative imidazole glycerol phosphate synthase subunit hisF2 (272 aa).

Asp-133 is a catalytic residue.

It belongs to the HisA/HisF family. In terms of assembly, heterodimer of HisH and HisF.

The protein resides in the cytoplasm. It catalyses the reaction 5-[(5-phospho-1-deoxy-D-ribulos-1-ylimino)methylamino]-1-(5-phospho-beta-D-ribosyl)imidazole-4-carboxamide + L-glutamine = D-erythro-1-(imidazol-4-yl)glycerol 3-phosphate + 5-amino-1-(5-phospho-beta-D-ribosyl)imidazole-4-carboxamide + L-glutamate + H(+). Its pathway is amino-acid biosynthesis; L-histidine biosynthesis; L-histidine from 5-phospho-alpha-D-ribose 1-diphosphate: step 5/9. Its function is as follows. IGPS catalyzes the conversion of PRFAR and glutamine to IGP, AICAR and glutamate. The HisF subunit catalyzes the cyclization activity that produces IGP and AICAR from PRFAR using the ammonia provided by the HisH subunit. The sequence is that of Putative imidazole glycerol phosphate synthase subunit hisF2 (hisF2) from Vibrio vulnificus (strain YJ016).